A 142-amino-acid polypeptide reads, in one-letter code: Small ribosomal subunit protein uS11 (142 aa).

A disordered region spans residues 1–21 (MPPKTRGAVRKPRRKDKKNIA). Basic residues predominate over residues 7–17 (GAVRKPRRKDK).

This sequence belongs to the universal ribosomal protein uS11 family. As to quaternary structure, part of the 30S ribosomal subunit. Interacts with proteins S7 and S18. Binds to IF-3.

Its function is as follows. Located on the platform of the 30S subunit, it bridges several disparate RNA helices of the 16S rRNA. Forms part of the Shine-Dalgarno cleft in the 70S ribosome. The protein is Small ribosomal subunit protein uS11 of Paenarthrobacter aurescens (strain TC1).